The following is a 716-amino-acid chain: Pyruvate/proton symporter BtsT (716 aa).

The Cytoplasmic portion of the chain corresponds to methionine 1–lysine 5. The helical transmembrane segment at isoleucine 6–valine 26 threads the bilayer. At alanine 27–arginine 30 the chain is on the periplasmic side. A helical transmembrane segment spans residues glycine 31 to tyrosine 51. The Cytoplasmic segment spans residues arginine 52–tyrosine 88. The chain crosses the membrane as a helical span at residues valine 89–leucine 109. Residues alanine 110–threonine 119 are Periplasmic-facing. Residues leucine 120–isoleucine 140 form a helical membrane-spanning segment. Residues serine 141–threonine 163 are Cytoplasmic-facing. Residues isoleucine 164 to valine 184 traverse the membrane as a helical segment. The Periplasmic segment spans residues valine 185 to serine 191. The helical transmembrane segment at proline 192–methionine 212 threads the bilayer. Topologically, residues arginine 213–glutamate 222 are cytoplasmic. The chain crosses the membrane as a helical span at residues valine 223–histidine 243. Residues aspartate 244–threonine 257 are Periplasmic-facing. The chain crosses the membrane as a helical span at residues isoleucine 258–leucine 278. Topologically, residues alanine 279–aspartate 282 are cytoplasmic. A helical transmembrane segment spans residues tyrosine 283–leucine 303. Residues asparagine 304–alanine 326 lie on the Periplasmic side of the membrane. The helical transmembrane segment at leucine 327–isoleucine 347 threads the bilayer. The Cytoplasmic portion of the chain corresponds to serine 348–serine 374. A helical transmembrane segment spans residues phenylalanine 375–methionine 395. The Periplasmic portion of the chain corresponds to asparagine 396–alanine 484. A helical membrane pass occupies residues aspartate 485 to leucine 505. Over aspartate 506 to aspartate 531 the chain is Cytoplasmic. A helical transmembrane segment spans residues serine 532 to tyrosine 552. Topologically, residues glutamine 553–leucine 568 are periplasmic. The chain crosses the membrane as a helical span at residues phenylalanine 569 to isoleucine 589. Over lysine 590–tyrosine 596 the chain is Cytoplasmic. A helical transmembrane segment spans residues isoleucine 597–leucine 617. Over lysine 618–serine 668 the chain is Periplasmic. Residues isoleucine 669–valine 689 traverse the membrane as a helical segment. Topologically, residues arginine 690–histidine 716 are cytoplasmic. Positions threonine 696–histidine 716 are disordered.

Belongs to the peptide transporter carbon starvation (CstA) (TC 2.A.114) family. As to quaternary structure, interacts with BtsS and YpdA.

It is found in the cell inner membrane. It catalyses the reaction pyruvate(out) + H(+)(out) = pyruvate(in) + H(+)(in). With respect to regulation, transport is inhibited by the protonophores 2,4-dinitrophenol (DNP) and carbonyl cyanide m-chlorophenyl hydrazone (CCCP), but not by ionophores such as valinomycin, nonactin and nigericin. In terms of biological role, transports pyruvate with a high affinity and specificity. The process is driven by the proton motive force. Under nutrient limiting conditions, mediates the uptake of pyruvate, thus enabling it to be used as a carbon source for the growth and survival. Part of a nutrient-sensing regulatory network composed of the two-component regulatory systems BtsS/BtsR and YpdA/YpdB, and their respective target proteins, BtsT and YhjX. The chain is Pyruvate/proton symporter BtsT from Escherichia coli (strain K12).